Here is a 113-residue protein sequence, read N- to C-terminus: Ranasmurfin (113 aa).

Tyr-2 carries the post-translational modification 2',4',5'-topaquinone. Positions Tyr-2–Lys-31 form a cross-link, lysine tyrosylquinone (Tyr-Lys). 3 disulfides stabilise this stretch: Cys-4–Cys-62, Cys-17–Cys-65, and Cys-37–Cys-101. Ser-9 carries the post-translational modification Aminomalonic acid (Ser); in chain B. A cross-link (S-cysteinyl 3-(oxidosulfanyl)alanine (Cys-Cys); in chain B) is located at residues Cys-17–Cys-65. The lysine tyrosylquinone (Lys-Tyr) cross-link spans Lys-30 to Tyr-108. At Cys-65 the chain carries Cysteine sulfenic acid (-SOH); in chain B. A 2',4',5'-topaquinone modification is found at Tyr-108. The Zn(2+) site is built by Tyr-108 and His-112. Tyr-108 participates in a covalent cross-link: 5'-tyrosyl-5'-aminotyrosine (Tyr-Tyr) (interchain with Y-108).

In terms of assembly, homodimer. The two chains, designated A and B, differ in their modifications, but not, it is thought, in their sequence. Zn(2+) serves as cofactor. In terms of tissue distribution, foam nest.

It localises to the secreted. The polypeptide is Ranasmurfin (Polypedates leucomystax (Common tree frog)).